Here is a 130-residue protein sequence, read N- to C-terminus: MFGGGGMNPRKMQQMMEQMGIDVDELDATEVVISLDDGTEVVFSDPDVTKMDARGQETYQVLGDPVERDAADAIEAAPADDSDDTDDDDAIPQGDVDIVVQRASVPEDEAREALEAADGDLAAAIDHVDE.

One can recognise an NAC-A/B domain in the interval 6-74 (GMNPRKMQQM…PVERDAADAI (69 aa)). The segment at 65-91 (PVERDAADAIEAAPADDSDDTDDDDAI) is disordered. Residues 78-90 (PADDSDDTDDDDA) show a composition bias toward acidic residues.

Belongs to the NAC-alpha family. In terms of assembly, homodimer. Interacts with the ribosome. Binds ribosomal RNA.

In terms of biological role, contacts the emerging nascent chain on the ribosome. In Halobacterium salinarum (strain ATCC 700922 / JCM 11081 / NRC-1) (Halobacterium halobium), this protein is Nascent polypeptide-associated complex protein.